The following is a 214-amino-acid chain: Large ribosomal subunit protein uL16-like (214 aa).

The protein belongs to the universal ribosomal protein uL16 family. Component of the 60S large ribosomal subunit (LSU).

The protein localises to the cytoplasm. In terms of biological role, testis-specific component of the ribosome, which is required for the transition from prophase to metaphase in male meiosis I. Compensates for the inactivated X-linked RPL10 paralog during spermatogenesis. The ribosome is a large ribonucleoprotein complex responsible for the synthesis of proteins in the cell. The small ribosomal subunit (SSU) binds messenger RNAs (mRNAs) and translates the encoded message by selecting cognate aminoacyl-transfer RNA (tRNA) molecules. The large subunit (LSU) contains the ribosomal catalytic site termed the peptidyl transferase center (PTC), which catalyzes the formation of peptide bonds, thereby polymerizing the amino acids delivered by tRNAs into a polypeptide chain. The nascent polypeptides leave the ribosome through a tunnel in the LSU and interact with protein factors that function in enzymatic processing, targeting, and the membrane insertion of nascent chains at the exit of the ribosomal tunnel. The sequence is that of Large ribosomal subunit protein uL16-like (RPL10L) from Bos taurus (Bovine).